A 1285-amino-acid polypeptide reads, in one-letter code: ABC-type transporter fsqE (1285 aa).

Residues Val-54–Ser-343 enclose the ABC transmembrane type-1 1 domain. 6 helical membrane passes run Ile-57–Val-77, Leu-102–Phe-122, Leu-176–Met-196, Ile-203–Val-223, Val-281–Trp-301, and Met-312–Ile-332. The ABC transporter 1 domain occupies Leu-380 to Lys-622. ATP is bound at residue Gly-413–Ser-420. The N-linked (GlcNAc...) asparagine glycan is linked to Asn-467. The segment at Asp-627–Asn-654 is disordered. 6 helical membrane passes run Leu-707–Phe-727, Gly-753–Leu-773, Gly-831–Trp-851, Leu-855–Leu-875, Ile-931–Leu-951, and Phe-968–Phe-988. The ABC transmembrane type-1 2 domain maps to Ala-713 to Lys-996. Asn-1037 is a glycosylation site (N-linked (GlcNAc...) asparagine). The ABC transporter 2 domain maps to Val-1043–Met-1281. Gly-1078–Ser-1085 serves as a coordination point for ATP. An N-linked (GlcNAc...) asparagine glycan is attached at Asn-1138.

This sequence belongs to the ABC transporter superfamily. ABCB family. Multidrug resistance exporter (TC 3.A.1.201) subfamily.

It localises to the membrane. The protein operates within secondary metabolite biosynthesis. Its function is as follows. ABC-type transporter; part of the gene cluster that mediates the biosynthesis of the isoquinoline alkaloids fumisoquin A, fumisoquin B and fumisoquin C; as well as small amounts of fumipyrrole as a shunt metabolite. The products of the cluster lead to a brown coloration and are important for growth and conidiation. FsqE possibly plays a role of self-protection. The chain is ABC-type transporter fsqE from Aspergillus fumigatus (strain ATCC MYA-4609 / CBS 101355 / FGSC A1100 / Af293) (Neosartorya fumigata).